A 388-amino-acid chain; its full sequence is Succinate--CoA ligase [ADP-forming] subunit beta (388 aa).

The ATP-grasp domain occupies Lys9 to His244. ATP-binding positions include Lys46, Gly53 to Gly55, Glu99, Thr102, and Glu107. Mg(2+) is bound by residues Asn199 and Asp213. Substrate contacts are provided by residues Asn264 and Gly321–Val323.

The protein belongs to the succinate/malate CoA ligase beta subunit family. In terms of assembly, heterotetramer of two alpha and two beta subunits. Mg(2+) is required as a cofactor.

The catalysed reaction is succinate + ATP + CoA = succinyl-CoA + ADP + phosphate. It carries out the reaction GTP + succinate + CoA = succinyl-CoA + GDP + phosphate. It participates in carbohydrate metabolism; tricarboxylic acid cycle; succinate from succinyl-CoA (ligase route): step 1/1. In terms of biological role, succinyl-CoA synthetase functions in the citric acid cycle (TCA), coupling the hydrolysis of succinyl-CoA to the synthesis of either ATP or GTP and thus represents the only step of substrate-level phosphorylation in the TCA. The beta subunit provides nucleotide specificity of the enzyme and binds the substrate succinate, while the binding sites for coenzyme A and phosphate are found in the alpha subunit. In Shewanella putrefaciens (strain CN-32 / ATCC BAA-453), this protein is Succinate--CoA ligase [ADP-forming] subunit beta.